Consider the following 485-residue polypeptide: MQLYNTLTRKKEKFIPQREGKASVYVCGITAYDLCHLGHARSSVAFDVLVRYLRHTGLDVTFVRNFTDVDDKIIKRAGETGLTSTEVAEKYMAAFHEDMDRLGCLRADIEPRCTQHIGEMIALCEDLISKGKAYSTASGDVYFRVRSFASYGKLSGRDVDDMRSGARVAPGEEKEDPLDFALWKSAKPGEPYWESPWGNGRPGWHIECSAMSEKHLPLPLDIHGGGQDLVFPHHENEIAQTEAATGKEFARYWVHNGFVQVNAEKMSKSLGNFSTIRDILQGYLPETLRYFLLTKHYRSPIDFTFDGMDEAEKNLRRIYQTLNLVENELQKTKWSAAPLPEEVLSEMDETERAWNEAMEDDLNTAAALGHIFGLVRLVNRIIEDKTMRKSAQARDALLRMQSMMARWGAVLGLFTRQPAEFLREMRDCRAARRDVDTARVETLLLERQEARKAKDFERSDAIREELARMGVEVQDTPAGAAWDIA.

Cys27 lines the Zn(2+) pocket. Positions 29 to 39 match the 'HIGH' region motif; it reads ITAYDLCHLGH. Residues Cys208, His233, and Glu237 each contribute to the Zn(2+) site. The short motif at 265–269 is the 'KMSKS' region element; that stretch reads KMSKS. Lys268 lines the ATP pocket.

It belongs to the class-I aminoacyl-tRNA synthetase family. Monomer. Zn(2+) is required as a cofactor.

The protein resides in the cytoplasm. It catalyses the reaction tRNA(Cys) + L-cysteine + ATP = L-cysteinyl-tRNA(Cys) + AMP + diphosphate. The chain is Cysteine--tRNA ligase from Oleidesulfovibrio alaskensis (strain ATCC BAA-1058 / DSM 17464 / G20) (Desulfovibrio alaskensis).